The chain runs to 398 residues: Streptopain (398 aa).

Residues 1 to 27 (MNKKKLGVRLLSLLALGGFVLANPVFA) form the signal peptide. The propeptide occupies 28–145 (DQNFARNEKE…TTYAGTAEIK (118 aa)). The active-site Nucleophile is the C192. C192 carries the post-translational modification Cysteine methyl disulfide; in zymogen form. 2 residues coordinate a protein: S282 and G339. The active-site Proton acceptor is H340. The interval 368–390 (RLDALNPSALGTGGGAGGFNGYQ) is C-terminal active site loop.

Belongs to the peptidase C10 family. In terms of assembly, monomer. In terms of processing, the mature protease is derived from the precursor sequence by cleavage, either in cis via an autocatalytic mechanism, or in trans by mature SpeB or host proteases (trypsin, plasmin or subtilisin). Maturation can involve a number of protein cleavage intermediates. Mature SpeB probably plays the most important role in protein maturation in physiological conditions. Post-translationally, methylthiolation at Cys-192 of the inactive zymogen form is probably involved in the mechanism of secretion of the proteinase into the culture fluid.

Its subcellular location is the secreted. The protein localises to the host extracellular space. The protein resides in the host cytoplasm. The catalysed reaction is Preferential cleavage with hydrophobic residues at P2, P1 and P1'.. With respect to regulation, synthesized as an inactive zymogen to protect the intracellular components of the bacteria from proteolytic activity during protein production. Once secreted into the extracellular milieu, cleaved into the active protease: maturation can be mediated in cis by autocatalytic cleavage, or in trans by mature SpeB or host proteases. Protease activity is strongly inhibited by zinc and copper, which prevent its maturation into an active protease: inhibition by metal ions may be required to prevent proteolysis of streptococcal proteins. Its function is as follows. Cysteine protease that acts as a key streptococcal virulence factor by cleaving host proteins involved in immune response. Triggers inflammation by mediating cleavage of host proteins, which can both promote host pathogenesis by triggering sterile inflammation and/or restrict streptococcal infection, depending on host immune statue and infection site. Cleaves host gasdermin-A (GSDMA) in epithelial cells, promoting GSDMA activation and formation of gasdermin pores, triggering pyroptosis. Pyroptosis triggers the elimination of the infected skin cell, depriving the pathogen of its protective niche, while inducing an inflammatory response. This ultimately prevents bacterial penetration of the epithelial barrier and a subsequent systemic dissemination of the pathogen. Also mediates cleavage of the cytokine precursor interleukin-1 beta (IL1B) to its mature form, resulting in inflammation and septic shock. SpeB-mediated maturation of IL1B plays a dual role depending on infection site: while IL1B inflammatory response prevents bacterial growth during invasive skin infections, it promotes streptococcal infection of the nasopharynx by disrupting colonization resistance mediated by the microbiota. Inhibits host autophagy be catalyzing cleavage and inactivation of key autophagy factors, such as CALCOCO2, NBR1 and SQSTM1. Cleaves and inhibits a number of complement factors, such as C2, C3-beta chain of C3, C4, C5 or SERPING1, thereby promoting evasion of host immunity. May also impair adaptive immunity by catalyzing cleavage and degradation of host immunoglobulins to promote immune system evasion; the relevance of this activity is however unsure in vivo. Catalyzes maturation and release of the peptide hormone bradykinin from the precursor Kininogen-1 (KNG1) to produce hypotension during septic shock. Also involved in bacterial translocation across the host epithelial barrier by mediating cleavage and degradation of host epithelial junction proteins, such as CDH1 and OCLN. Additionally, has been involved in degradation of fibronectin and vitronectin, two host extracellular matrix proteins involved in tissue integrity. Also able to catalyze cleavage and degradation of streptococcal proteins, such as C5a peptidase, EndoS or SmeZ. Degradation of streptococcal proteins is however strictly regulated to preserve integrity of other virulence factors. This is Streptopain from Streptococcus pyogenes serotype M1.